Consider the following 371-residue polypeptide: tRNA-specific 2-thiouridylase MnmA (371 aa).

ATP is bound by residues 13–20 (GMSGGVDS) and methionine 39. Positions 99–101 (NPD) are interaction with target base in tRNA. Cysteine 104 serves as the catalytic Nucleophile. A disulfide bridge connects residues cysteine 104 and cysteine 200. Glycine 128 contributes to the ATP binding site. Residues 150–152 (KDQ) form an interaction with tRNA region. Cysteine 200 acts as the Cysteine persulfide intermediate in catalysis. Residues 308 to 309 (RY) are interaction with tRNA.

It belongs to the MnmA/TRMU family.

Its subcellular location is the cytoplasm. The catalysed reaction is S-sulfanyl-L-cysteinyl-[protein] + uridine(34) in tRNA + AH2 + ATP = 2-thiouridine(34) in tRNA + L-cysteinyl-[protein] + A + AMP + diphosphate + H(+). Functionally, catalyzes the 2-thiolation of uridine at the wobble position (U34) of tRNA, leading to the formation of s(2)U34. The sequence is that of tRNA-specific 2-thiouridylase MnmA from Listeria monocytogenes serotype 4a (strain HCC23).